Here is a 62-residue protein sequence, read N- to C-terminus: Alpha-conotoxin Vt1.27 (62 aa).

An N-terminal signal peptide occupies residues 1–21 (MGMRMMFTVFLLVVLATTVVS). The propeptide occupies 22–40 (FTLDRASDGASAAADLVAR). Intrachain disulfides connect C46-C52 and C47-C61.

The protein belongs to the conotoxin A superfamily. In terms of tissue distribution, expressed by the venom duct.

It localises to the secreted. In terms of biological role, the short (45-61) amidated synthetic peptide inhibits the rat neuronal alpha-3-beta-2/CHRNA3-CHRNB2 nicotinic acetylcholine receptor (nAChR) (IC(50)=1.16 uM). It also inhibits Cav2.2/CACNA1C voltage-gated calcium channel (IC(50)=398 nM). In vivo, when tested in rat pain models, this short amidated peptide increases the pain threshold. The protein is Alpha-conotoxin Vt1.27 of Conus planorbis (Planorbis cone).